The chain runs to 284 residues: Trimeric intracellular cation channel type B (284 aa).

Topologically, residues 1-15 (MESFSELSLQFSQLS) are lumenal. The chain crosses the membrane as a helical span at residues 16–32 (MFPFFETAHYLTSVMSA). Residues 33–44 (REQAGAVDVASR) are Cytoplasmic-facing. Residues 45–68 (SPLASWFSSMLYCFGGGILSSILL) form a helical membrane-spanning segment. Over 69 to 79 (AEPPVGILSNT) the chain is Lumenal. A helical transmembrane segment spans residues 80–99 (TSIILASAVWYMVYYFPYDL). The Cytoplasmic portion of the chain corresponds to 100-102 (FYN). The helical transmembrane segment at 103 to 121 (CFFFLPIRLILAGMKEVTR) threads the bilayer. Residues Lys-117 and Arg-121 each contribute to the a 1,2-diacyl-sn-glycero-3-phospho-(1D-myo-inositol-4,5-bisphosphate) site. The Lumenal portion of the chain corresponds to 122-139 (TWKILSGVAHAHSHYKDA). A helical transmembrane segment spans residues 140–157 (MLVMITIGWARGAGGGLI). The Cytoplasmic portion of the chain corresponds to 158–178 (SNFEQLVRGVWKPESNEFLKM). Residues 179–196 (SYPVKVTLIGAVLFTLQH) form a helical membrane-spanning segment. The Lumenal portion of the chain corresponds to 197–204 (GQYLPISR). A helical transmembrane segment spans residues 205-225 (HNLMFIYTLFLILIKVTMMLT). Residues 226-284 (RSTASPFLPLETSLQHILFSRQQIPAEVRESPSSSGDKGKPSKKTLDKDSGEQDNKKDN) are Cytoplasmic-facing. Positions 250–284 (PAEVRESPSSSGDKGKPSKKTLDKDSGEQDNKKDN) are disordered. Over residues 262–284 (DKGKPSKKTLDKDSGEQDNKKDN) the composition is skewed to basic and acidic residues.

The protein belongs to the TMEM38 family. As to quaternary structure, homotrimer; conformation seems to be controled by binding to diacylglycerol (DAG).

The protein resides in the endoplasmic reticulum membrane. It catalyses the reaction K(+)(in) = K(+)(out). Channel activity is activated by increased cytosolic Ca(2+) levels and blocked by luminal high Ca(2+) levels. In terms of biological role, intracellular monovalent cation channel required for maintenance of rapid intracellular calcium release. Acts as a potassium counter-ion channel that functions in synchronization with calcium release from intracellular stores. Activated by increased cytosolic Ca(2+) levels. In Xenopus tropicalis (Western clawed frog), this protein is Trimeric intracellular cation channel type B (tmem38b).